The primary structure comprises 240 residues: EF-hand domain-containing protein D1 (240 aa).

The tract at residues 17-54 (EVRAETDQGDPQPAPCDAPAGHPEPEPPARAPTASADS) is disordered. EF-hand domains lie at 91–126 (RLLK…LGAP) and 127–162 (QTHL…AAAG). D104, D108, E115, D140, D142, D144, K146, and E151 together coordinate Ca(2+).

In terms of tissue distribution, widely expressed. Highest expression in testis, followed by ovary, kidney, cerebrum, cerebellum, heart, liver, and spleen. In the cerebrum and cerebellum, undetectable at embryonic stages, expression increases after birth up to adult stage. In adult CNS, detected in neurons of the cerebellum, cerebrum and hippocampus formation, including dentate gyrus and Cornu Ammonis, but not in the white matter. In the testis, expressed in spermatocytes, but not in spermatogonia nor in interstitial cells. In ovary, found predominantly in mural granulosa cells and those of the cumulus oophorus. In kidney, expressed in collecting ducts, but not in glomeruli. Not detected in skeletal muscle.

Its subcellular location is the mitochondrion inner membrane. Functionally, acts as a calcium sensor for mitochondrial flash (mitoflash) activation, an event characterized by stochastic bursts of superoxide production. May play a role in neuronal differentiation. This is EF-hand domain-containing protein D1 (Efhd1) from Mus musculus (Mouse).